A 98-amino-acid polypeptide reads, in one-letter code: DNA-binding protein Fis (98 aa).

The segment at residues 74 to 93 is a DNA-binding region (H-T-H motif); the sequence is QTKAANMMGINRGTLRKKLK.

It belongs to the transcriptional regulatory Fis family. Homodimer.

Functionally, activates ribosomal RNA transcription. Plays a direct role in upstream activation of rRNA promoters. In Aliivibrio fischeri (strain ATCC 700601 / ES114) (Vibrio fischeri), this protein is DNA-binding protein Fis.